The following is a 1207-amino-acid chain: DNA-directed RNA polymerase subunit beta' (1207 aa).

Zn(2+) contacts are provided by C60, C62, C75, and C78. Positions 449, 451, and 453 each coordinate Mg(2+). Positions 822, 896, 903, and 906 each coordinate Zn(2+).

It belongs to the RNA polymerase beta' chain family. As to quaternary structure, the RNAP catalytic core consists of 2 alpha, 1 beta, 1 beta' and 1 omega subunit. When a sigma factor is associated with the core the holoenzyme is formed, which can initiate transcription. Mg(2+) is required as a cofactor. The cofactor is Zn(2+).

It catalyses the reaction RNA(n) + a ribonucleoside 5'-triphosphate = RNA(n+1) + diphosphate. In terms of biological role, DNA-dependent RNA polymerase catalyzes the transcription of DNA into RNA using the four ribonucleoside triphosphates as substrates. This is DNA-directed RNA polymerase subunit beta' from Staphylococcus epidermidis (strain ATCC 35984 / DSM 28319 / BCRC 17069 / CCUG 31568 / BM 3577 / RP62A).